Reading from the N-terminus, the 368-residue chain is D-Ala-D/L-Ala epimerase (368 aa).

Residues threonine 135 and 160-162 (KVK) each bind substrate. Mg(2+) contacts are provided by aspartate 190, glutamate 216, and aspartate 241. Residues lysine 265 and 318–320 (DFD) contribute to the substrate site.

Belongs to the mandelate racemase/muconate lactonizing enzyme family. Mg(2+) is required as a cofactor.

Functionally, catalyzes the epimerization of D-Ala-D-Ala to D-Ala-L-Ala. Has broad substrate specificity and catalyzes the epimerization of a variety of dipeptides containing an N-terminal Ala followed by a hydrophobic or polar residue, such as Val, Ser and Met (in vitro). The protein is D-Ala-D/L-Ala epimerase (tfdD) of Cytophaga hutchinsonii (strain ATCC 33406 / DSM 1761 / CIP 103989 / NBRC 15051 / NCIMB 9469 / D465).